Consider the following 317-residue polypeptide: uncharacterized protein (317 aa).

Residues 68–78 (DSTNTDISNET) show a composition bias toward low complexity. Residues 68-87 (DSTNTDISNETPILSNNTPI) are disordered.

This is an uncharacterized protein from Methanocaldococcus jannaschii (strain ATCC 43067 / DSM 2661 / JAL-1 / JCM 10045 / NBRC 100440) (Methanococcus jannaschii).